A 235-amino-acid chain; its full sequence is Small ribosomal subunit protein uS3 (235 aa).

The 69-residue stretch at 39 to 107 (VRKFLNKELM…PAQINIAEVK (69 aa)) folds into the KH type-2 domain.

This sequence belongs to the universal ribosomal protein uS3 family. Part of the 30S ribosomal subunit. Forms a tight complex with proteins S10 and S14.

Its function is as follows. Binds the lower part of the 30S subunit head. Binds mRNA in the 70S ribosome, positioning it for translation. This Actinobacillus succinogenes (strain ATCC 55618 / DSM 22257 / CCUG 43843 / 130Z) protein is Small ribosomal subunit protein uS3.